The following is a 294-amino-acid chain: MSTAPPSAPTLIIVSGLSGSGKSVALKTFEDQDYYCSDNLPINLLPDFVRSLLANHDGSAPRRLAVGIDVRGQSNLSQLGNWRQLATDAGVEVEVLFFEASDEAVLKRYADTRRRHPLSQLGLSLPEAIARERELTAPLRREADAVIDTSTLNVHQLRRRIITEFALDHATRLSLLFESFAYKRGVPAEADFVFDARVLPNPHWDPDLRALSGREPGVRDYLEAQPDVQHYLAQLTDFLDTWLPKLGDGTRSYVTVAFGCTGGKHRSVFLAERMARHAREMGWEDVATYHREQD.

Gly-16–Ser-23 serves as a coordination point for ATP. Asp-69–Gly-72 contacts GTP.

The protein belongs to the RapZ-like family.

Displays ATPase and GTPase activities. This is Nucleotide-binding protein Smal_0950 from Stenotrophomonas maltophilia (strain R551-3).